We begin with the raw amino-acid sequence, 89 residues long: Protein S100-A8 (89 aa).

EF-hand domains follow at residues 12 to 47 and 46 to 81; these read LIDV…KFMK and MKKK…VGLE. Positions 17 and 27 each coordinate Zn(2+). D33 contributes to the Ca(2+) binding site. An S-nitrosocysteine modification is found at C42. Ca(2+) is bound by residues D59, N61, D63, and E70. Zn(2+) is bound at residue H83.

This sequence belongs to the S-100 family. In terms of assembly, homodimer. Preferentially exists as a heterodimer or heterotetramer with S100A9 known as calprotectin (S100A8/A9). S100A8 interacts with AGER, ATP2A2 and with the heterodimeric complex formed by TLR4 and LY96. Calprotectin (S100A8/9) interacts with CEACAM3 and tubulin filaments in a calcium-dependent manner. Heterotetrameric calprotectin (S100A8/A9) interacts with ANXA6 and associates with tubulin filaments in activated monocytes. S100A8 and calprotectin (S100A8/9) interact with NCF2/P67PHOX, RAC1 and RAC2. Calprotectin (S100A8/9) interacts with CYBA and CYBB. Calprotectin (S100A8/9) interacts with NOS2 to form the iNOS-S100A8/A9 transnitrosylase complex. Calprotectin (S100A8/9) interacts with CD69. Found essentially in phagocytic cells.

Its subcellular location is the secreted. The protein localises to the cytoplasm. It localises to the cytoskeleton. It is found in the cell membrane. Functionally, S100A8 is a calcium- and zinc-binding protein which plays a prominent role in the regulation of inflammatory processes and immune response. It can induce neutrophil chemotaxis and adhesion. Predominantly found as calprotectin (S100A8/A9) which has a wide plethora of intra- and extracellular functions. The intracellular functions include: facilitating leukocyte arachidonic acid trafficking and metabolism, modulation of the tubulin-dependent cytoskeleton during migration of phagocytes and activation of the neutrophilic NADPH-oxidase. Also participates in regulatory T-cell differentiation together with CD69. Activates NADPH-oxidase by facilitating the enzyme complex assembly at the cell membrane, transferring arachidonic acid, an essential cofactor, to the enzyme complex and S100A8 contributes to the enzyme assembly by directly binding to NCF2/P67PHOX. The extracellular functions involve pro-inflammatory, antimicrobial, oxidant-scavenging and apoptosis-inducing activities. Its pro-inflammatory activity includes recruitment of leukocytes, promotion of cytokine and chemokine production, and regulation of leukocyte adhesion and migration. Acts as an alarmin or a danger associated molecular pattern (DAMP) molecule and stimulates innate immune cells via binding to pattern recognition receptors such as Toll-like receptor 4 (TLR4) and receptor for advanced glycation endproducts (AGER). Binding to TLR4 and AGER activates the MAP-kinase and NF-kappa-B signaling pathways resulting in the amplification of the pro-inflammatory cascade. Has antimicrobial activity towards bacteria and fungi and exerts its antimicrobial activity probably via chelation of Zn(2+) which is essential for microbial growth. Can induce cell death via autophagy and apoptosis and this occurs through the cross-talk of mitochondria and lysosomes via reactive oxygen species (ROS) and the process involves BNIP3. Can regulate neutrophil number and apoptosis by an anti-apoptotic effect; regulates cell survival via ITGAM/ITGB and TLR4 and a signaling mechanism involving MEK-ERK. Its role as an oxidant scavenger has a protective role in preventing exaggerated tissue damage by scavenging oxidants. The iNOS-S100A8/A9 transnitrosylase complex is proposed to direct selective inflammatory stimulus-dependent S-nitrosylation of multiple targets such as GAPDH, ANXA5, EZR, MSN and VIM by recognizing a [IL]-x-C-x-x-[DE] motif; S100A8 seems to contribute to S-nitrosylation site selectivity. This chain is Protein S100-A8 (S100A8), found in Bos taurus (Bovine).